Consider the following 248-residue polypeptide: Mannose-binding protein C (248 aa).

Positions 1-20 (MSLIPSLSLLLMSMVAASYS) are cleaved as a signal peptide. Residues 42-99 (GINGFPGKDGRDGTKGEKGEPGQGLRGLQGPPGKLGPPGNPGPSGSPGPKGQKGDPGN) form the Collagen-like domain. The interval 43-110 (INGFPGKDGR…PDCDSSLAVS (68 aa)) is disordered. A 4-hydroxyproline modification is found at Pro47. A compositionally biased stretch (basic and acidic residues) spans 49-61 (KDGRDGTKGEKGE). 4-hydroxyproline occurs at positions 73, 79, 82, and 88. Residues 75–87 (KLGPPGNPGPSGS) are compositionally biased toward pro residues. Residues 112–130 (RKALQTEMARIKKWLTFSL) are a coiled coil. One can recognise a C-type lectin domain in the interval 134-245 (VGNKFFLTNG…CSSSHLAVCE (112 aa)). Cystine bridges form between Cys155-Cys244 and Cys222-Cys236.

Oligomeric complex of 3 or more homotrimers. Interacts with MASP1 and MASP2. Interacts with MEP1A and MEP1B and may inhibit their catalytic activity. Post-translationally, hydroxylation on proline residues within the sequence motif, GXPG, is most likely to be 4-hydroxy as this fits the requirement for 4-hydroxylation in vertebrates.

The protein localises to the secreted. In terms of biological role, calcium-dependent lectin involved in innate immune defense. Binds mannose, fucose and N-acetylglucosamine on different microorganisms and activates the lectin complement pathway. Binds to late apoptotic cells, as well as to apoptotic blebs and to necrotic cells, but not to early apoptotic cells, facilitating their uptake by macrophages. The protein is Mannose-binding protein C (MBL2) of Nomascus concolor (Black crested gibbon).